Here is a 228-residue protein sequence, read N- to C-terminus: Auxin-responsive protein IAA16 (228 aa).

An EAR-like (transcriptional repression) motif is present at residues 19 to 23 (LSLAL). Positions 28-39 (SSSGLQGNTSTA) are enriched in polar residues. Disordered regions lie at residues 28–57 (SSSG…PAAP) and 70–90 (NLAS…AAAA). The PB1 domain maps to 97–214 (ARFVKVNMDG…RVLRSSDLNA (118 aa)).

The protein belongs to the Aux/IAA family. Homodimers and heterodimers. Expressed in roots, flowers and seedlings.

Its subcellular location is the nucleus. Functionally, aux/IAA proteins are short-lived transcriptional factors that function as repressors of early auxin response genes at low auxin concentrations. The polypeptide is Auxin-responsive protein IAA16 (IAA16) (Oryza sativa subsp. japonica (Rice)).